The sequence spans 353 residues: DNA polymerase IV (353 aa).

The region spanning I6–G187 is the UmuC domain. Residues D10 and D105 each contribute to the Mg(2+) site. E106 is an active-site residue.

Belongs to the DNA polymerase type-Y family. Monomer. Mg(2+) serves as cofactor.

It is found in the cytoplasm. It catalyses the reaction DNA(n) + a 2'-deoxyribonucleoside 5'-triphosphate = DNA(n+1) + diphosphate. Functionally, poorly processive, error-prone DNA polymerase involved in untargeted mutagenesis. Copies undamaged DNA at stalled replication forks, which arise in vivo from mismatched or misaligned primer ends. These misaligned primers can be extended by PolIV. Exhibits no 3'-5' exonuclease (proofreading) activity. May be involved in translesional synthesis, in conjunction with the beta clamp from PolIII. This Pseudomonas savastanoi pv. phaseolicola (strain 1448A / Race 6) (Pseudomonas syringae pv. phaseolicola (strain 1448A / Race 6)) protein is DNA polymerase IV.